Reading from the N-terminus, the 153-residue chain is uncharacterized protein (153 aa).

The interval 16–40 (DEQTPLLNNDGIQRTPPSAEADMSL) is disordered. Positions 20 to 31 (PLLNNDGIQRTP) are enriched in polar residues.

This is an uncharacterized protein from Schizosaccharomyces pombe (strain 972 / ATCC 24843) (Fission yeast).